Reading from the N-terminus, the 96-residue chain is Probable Fe(2+)-trafficking protein (96 aa).

The segment at 21–40 (LPKMPHPPFPNKKGQELQET) is disordered.

Belongs to the Fe(2+)-trafficking protein family.

Its function is as follows. Could be a mediator in iron transactions between iron acquisition and iron-requiring processes, such as synthesis and/or repair of Fe-S clusters in biosynthetic enzymes. The polypeptide is Probable Fe(2+)-trafficking protein (Psychrobacter arcticus (strain DSM 17307 / VKM B-2377 / 273-4)).